A 345-amino-acid chain; its full sequence is tRNA-specific 2-thiouridylase MnmA (345 aa).

ATP-binding positions include 6-13 (LMSGGVDS) and Leu32. The active-site Nucleophile is Cys92. Cys92 and Cys191 are oxidised to a cystine. Gly116 is an ATP binding site. The tract at residues 138-140 (KDQ) is interaction with tRNA. The Cysteine persulfide intermediate role is filled by Cys191. The interaction with tRNA stretch occupies residues 293–294 (RY).

It belongs to the MnmA/TRMU family.

The protein resides in the cytoplasm. The catalysed reaction is S-sulfanyl-L-cysteinyl-[protein] + uridine(34) in tRNA + AH2 + ATP = 2-thiouridine(34) in tRNA + L-cysteinyl-[protein] + A + AMP + diphosphate + H(+). Catalyzes the 2-thiolation of uridine at the wobble position (U34) of tRNA, leading to the formation of s(2)U34. This Helicobacter hepaticus (strain ATCC 51449 / 3B1) protein is tRNA-specific 2-thiouridylase MnmA.